The sequence spans 450 residues: Phosphoglucosamine mutase (450 aa).

Residue Ser-104 is the Phosphoserine intermediate of the active site. Positions 104, 243, 245, and 247 each coordinate Mg(2+). Ser-104 carries the phosphoserine modification.

The protein belongs to the phosphohexose mutase family. Requires Mg(2+) as cofactor. Post-translationally, activated by phosphorylation.

It carries out the reaction alpha-D-glucosamine 1-phosphate = D-glucosamine 6-phosphate. In terms of biological role, catalyzes the conversion of glucosamine-6-phosphate to glucosamine-1-phosphate. In Cutibacterium acnes (strain DSM 16379 / KPA171202) (Propionibacterium acnes), this protein is Phosphoglucosamine mutase.